The sequence spans 262 residues: Succinate dehydrogenase [ubiquinone] iron-sulfur subunit (262 aa).

The region spanning 21–110 (KLIKIFRWDS…NNIIYVYPLP (90 aa)) is the 2Fe-2S ferredoxin-type domain. The [2Fe-2S] cluster site is built by Cys-73, Cys-78, Cys-81, and Cys-93. In terms of domain architecture, 4Fe-4S ferredoxin-type spans 154–184 (DRLYLDGLYECILCACCSASCPSYWWNHDKY). Cys-164, Cys-167, and Cys-170 together coordinate [4Fe-4S] cluster. Cys-174 is a [3Fe-4S] cluster binding site. Trp-179 is a binding site for a ubiquinone. Positions 221 and 227 each coordinate [3Fe-4S] cluster. Cys-231 is a [4Fe-4S] cluster binding site.

The protein belongs to the succinate dehydrogenase/fumarate reductase iron-sulfur protein family. Component of complex II composed of four subunits: a flavoprotein (FP), an iron-sulfur protein (IP), and a cytochrome b composed of a large and a small subunit. Requires [2Fe-2S] cluster as cofactor. [3Fe-4S] cluster serves as cofactor. The cofactor is [4Fe-4S] cluster.

The protein resides in the mitochondrion inner membrane. The catalysed reaction is a quinone + succinate = fumarate + a quinol. The protein operates within carbohydrate metabolism; tricarboxylic acid cycle; fumarate from succinate (eukaryal route): step 1/1. Functionally, iron-sulfur protein (IP) subunit of succinate dehydrogenase (SDH) that is involved in complex II of the mitochondrial electron transport chain and is responsible for transferring electrons from succinate to ubiquinone (coenzyme Q). This chain is Succinate dehydrogenase [ubiquinone] iron-sulfur subunit (SDH2), found in Cyanidium caldarium (Red alga).